Consider the following 189-residue polypeptide: Photosystem I assembly protein Ycf4 (189 aa).

2 consecutive transmembrane segments (helical) span residues 25–45 (SVYF…LAGL) and 62–82 (LVFI…SLAG).

The protein belongs to the Ycf4 family.

Its subcellular location is the cellular thylakoid membrane. Functionally, seems to be required for the assembly of the photosystem I complex. This chain is Photosystem I assembly protein Ycf4, found in Synechococcus sp. (strain JA-2-3B'a(2-13)) (Cyanobacteria bacterium Yellowstone B-Prime).